Here is a 248-residue protein sequence, read N- to C-terminus: MAGHSQFKNIMHRKGRQDAVRSKMFSKLGREITVAAKQGLPDPTMNPRLRLAIQNAKAQSMPKDNIERAIKKAAGNDGENYDEVRYEGRGPGGVSVIVEALTDNRNRTASNVRAAFTKSGGALGETGSVSFMFDRVGEIVYKSSVGDADKVMEAAIEAGADDVQSGEEEHVIICAFEDIGEVSKALEAALGEAESIKTIWKPQTNTELDEEKARSVLKLLNVLEDDDDVQNVYTNFEVSDEVMEKLSA.

Belongs to the TACO1 family.

The protein resides in the cytoplasm. The protein is Probable transcriptional regulatory protein Oant_1200 of Brucella anthropi (strain ATCC 49188 / DSM 6882 / CCUG 24695 / JCM 21032 / LMG 3331 / NBRC 15819 / NCTC 12168 / Alc 37) (Ochrobactrum anthropi).